Consider the following 608-residue polypeptide: Phosphoenolpyruvate carboxykinase [GTP] (608 aa).

Substrate is bound by residues Arg82 and 222-224; that span reads YGG. Mn(2+)-binding residues include Lys231 and His251. Ser273 lines the substrate pocket. A GTP-binding site is contributed by 274–279; it reads ACGKTN. Cys275 is a catalytic residue. Asp298 is a Mn(2+) binding site. 389–391 contacts substrate; the sequence is NSR. Residues Arg391, Arg422, and 517-520 each bind GTP; that span reads FGDN.

Belongs to the phosphoenolpyruvate carboxykinase [GTP] family. Monomer. It depends on Mn(2+) as a cofactor.

It localises to the cytoplasm. The catalysed reaction is oxaloacetate + GTP = phosphoenolpyruvate + GDP + CO2. It participates in carbohydrate biosynthesis; gluconeogenesis. Its function is as follows. Catalyzes the conversion of oxaloacetate (OAA) to phosphoenolpyruvate (PEP), the rate-limiting step in the metabolic pathway that produces glucose from lactate and other precursors derived from the citric acid cycle. The polypeptide is Phosphoenolpyruvate carboxykinase [GTP] (Paenarthrobacter aurescens (strain TC1)).